Reading from the N-terminus, the 144-residue chain is Small ribosomal subunit protein uS19 (144 aa).

It belongs to the universal ribosomal protein uS19 family.

In terms of biological role, protein S19 forms a complex with S13 that binds strongly to the 16S ribosomal RNA. The sequence is that of Small ribosomal subunit protein uS19 (rps19) from Aeropyrum pernix (strain ATCC 700893 / DSM 11879 / JCM 9820 / NBRC 100138 / K1).